A 120-amino-acid chain; its full sequence is Large ribosomal subunit protein bL12 (120 aa).

It belongs to the bacterial ribosomal protein bL12 family. Homodimer. Part of the ribosomal stalk of the 50S ribosomal subunit. Forms a multimeric L10(L12)X complex, where L10 forms an elongated spine to which 2 to 4 L12 dimers bind in a sequential fashion. Binds GTP-bound translation factors.

In terms of biological role, forms part of the ribosomal stalk which helps the ribosome interact with GTP-bound translation factors. Is thus essential for accurate translation. This is Large ribosomal subunit protein bL12 from Lactobacillus gasseri (strain ATCC 33323 / DSM 20243 / BCRC 14619 / CIP 102991 / JCM 1131 / KCTC 3163 / NCIMB 11718 / NCTC 13722 / AM63).